The sequence spans 160 residues: SsrA-binding protein (160 aa).

The segment covering 137 to 153 (DKRDDIKTREWKQDKAR) has biased composition (basic and acidic residues). Positions 137–160 (DKRDDIKTREWKQDKARIMKNANR) are disordered.

It belongs to the SmpB family.

The protein localises to the cytoplasm. Required for rescue of stalled ribosomes mediated by trans-translation. Binds to transfer-messenger RNA (tmRNA), required for stable association of tmRNA with ribosomes. tmRNA and SmpB together mimic tRNA shape, replacing the anticodon stem-loop with SmpB. tmRNA is encoded by the ssrA gene; the 2 termini fold to resemble tRNA(Ala) and it encodes a 'tag peptide', a short internal open reading frame. During trans-translation Ala-aminoacylated tmRNA acts like a tRNA, entering the A-site of stalled ribosomes, displacing the stalled mRNA. The ribosome then switches to translate the ORF on the tmRNA; the nascent peptide is terminated with the 'tag peptide' encoded by the tmRNA and targeted for degradation. The ribosome is freed to recommence translation, which seems to be the essential function of trans-translation. In Edwardsiella ictaluri (strain 93-146), this protein is SsrA-binding protein.